A 180-amino-acid chain; its full sequence is Stathmin-3 (180 aa).

2 S-palmitoyl cysteine lipidation sites follow: Cys-22 and Cys-24. In terms of domain architecture, SLD spans 38-180 (GDMEVKQLDK…NKEQREEMSG (143 aa)). A phosphoserine mark is found at Ser-50, Ser-60, Ser-65, Ser-68, Ser-72, Ser-73, and Ser-81. The disordered stretch occupies residues 59–82 (KSPSDLSPESPMLSSPPKKKDTSL). Low complexity predominate over residues 60 to 74 (SPSDLSPESPMLSSP). Positions 76–179 (KKKDTSLEEL…RNKEQREEMS (104 aa)) form a coiled coil.

This sequence belongs to the stathmin family. Interacts with STAT3. Interacts with CLU (secreted form); this interaction may act as an important modulator during neuronal differentiation. In terms of processing, N-terminal palmitoylation promotes specific anchoring to the cytosolic leaflet of Golgi membranes and subsequent vesicular trafficking along dendrites and axons. Neuronal Stathmins are substrates for palmitoyltransferases ZDHHC3, ZDHHC7 and ZDHHC15.

It is found in the golgi apparatus. The protein resides in the cell projection. The protein localises to the growth cone. It localises to the axon. Its subcellular location is the cytoplasm. It is found in the cytosol. Exhibits microtubule-destabilizing activity, which is antagonized by STAT3. This Macaca fascicularis (Crab-eating macaque) protein is Stathmin-3 (STMN3).